An 825-amino-acid chain; its full sequence is Quinic acid utilization activator (825 aa).

A compositionally biased stretch (polar residues) spans 1–12 (MSSDTRQTSGGN). Residues 1-45 (MSSDTRQTSGGNARSKRRLTDAVDEDGRPTATAEDPTSNPKRQRV) form a disordered region. Positions 18–28 (RLTDAVDEDGR) are enriched in basic and acidic residues. The zn(2)-C6 fungal-type DNA-binding region spans 49-76 (CDSCRSKKDKCDGAQPICSTCASLSRPC). Disordered stretches follow at residues 160-186 (EQPE…SSVL), 204-224 (QSPL…TTRL), and 658-683 (GSQR…SLPG). The segment covering 165-174 (DQERSARGEI) has biased composition (basic and acidic residues). The segment covering 658–672 (GSQRRPRHATQQGTH) has biased composition (polar residues).

The protein resides in the nucleus. Transcription activation of genes for enzymes and proteins of quinate metabolism by binding to a 16 base-pair sequence (consensus 5'-GGATAANNNNTTATCC-3') in front of each qut gene. The sequence is that of Quinic acid utilization activator (qutA) from Emericella nidulans (strain FGSC A4 / ATCC 38163 / CBS 112.46 / NRRL 194 / M139) (Aspergillus nidulans).